Here is a 415-residue protein sequence, read N- to C-terminus: Leucine-rich repeat-containing protein 34 (415 aa).

LRR repeat units follow at residues 246–272 (TLRY…LKSN) and 274–296 (TLEV…LSET).

As to quaternary structure, interacts with NPM1 and NCL.

It localises to the nucleus. Its subcellular location is the nucleolus. The protein resides in the cytoplasm. Its function is as follows. Highly expressed in stem cells where it may be involved in regulation of pluripotency. In embryonic stem cells (ESCs), important for normal expression of the pluripotency regulators POU5F1/OCT4 and KLF4. Also important for expression of the ectodermal marker gene NES and the endodermal marker gene GATA4. Promotes stem cell proliferation in vitro. In Rattus norvegicus (Rat), this protein is Leucine-rich repeat-containing protein 34 (Lrrc34).